A 267-amino-acid polypeptide reads, in one-letter code: Tryptophan synthase alpha chain (267 aa).

Active-site proton acceptor residues include Glu47 and Asp58.

The protein belongs to the TrpA family. As to quaternary structure, tetramer of two alpha and two beta chains.

The enzyme catalyses (1S,2R)-1-C-(indol-3-yl)glycerol 3-phosphate + L-serine = D-glyceraldehyde 3-phosphate + L-tryptophan + H2O. It functions in the pathway amino-acid biosynthesis; L-tryptophan biosynthesis; L-tryptophan from chorismate: step 5/5. Functionally, the alpha subunit is responsible for the aldol cleavage of indoleglycerol phosphate to indole and glyceraldehyde 3-phosphate. This chain is Tryptophan synthase alpha chain, found in Chlorobium chlorochromatii (strain CaD3).